A 446-amino-acid polypeptide reads, in one-letter code: tRNA-2-methylthio-N(6)-dimethylallyladenosine synthase (446 aa).

Residues 2 to 119 (KKIYIKTFGC…LPELIAQRRE (118 aa)) form the MTTase N-terminal domain. [4Fe-4S] cluster is bound by residues C11, C48, C82, C156, C160, and C163. The region spanning 142 to 376 (RVEGGAAFVS…RIEAQAQGVN (235 aa)) is the Radical SAM core domain. One can recognise a TRAM domain in the interval 377–440 (RSMVGSVQRV…PHSLRGEAVT (64 aa)).

The protein belongs to the methylthiotransferase family. MiaB subfamily. As to quaternary structure, monomer. [4Fe-4S] cluster serves as cofactor.

Its subcellular location is the cytoplasm. It carries out the reaction N(6)-dimethylallyladenosine(37) in tRNA + (sulfur carrier)-SH + AH2 + 2 S-adenosyl-L-methionine = 2-methylsulfanyl-N(6)-dimethylallyladenosine(37) in tRNA + (sulfur carrier)-H + 5'-deoxyadenosine + L-methionine + A + S-adenosyl-L-homocysteine + 2 H(+). Catalyzes the methylthiolation of N6-(dimethylallyl)adenosine (i(6)A), leading to the formation of 2-methylthio-N6-(dimethylallyl)adenosine (ms(2)i(6)A) at position 37 in tRNAs that read codons beginning with uridine. In Thiobacillus denitrificans (strain ATCC 25259 / T1), this protein is tRNA-2-methylthio-N(6)-dimethylallyladenosine synthase.